Consider the following 326-residue polypeptide: DNA-directed RNA polymerase subunit alpha (326 aa).

The tract at residues 1 to 232 (MQSATEFLKP…SQLSVFADLE (232 aa)) is alpha N-terminal domain (alpha-NTD). The segment at 246 to 326 (VDPLLLRPVD…NWPPAGLERP (81 aa)) is alpha C-terminal domain (alpha-CTD).

It belongs to the RNA polymerase alpha chain family. As to quaternary structure, homodimer. The RNAP catalytic core consists of 2 alpha, 1 beta, 1 beta' and 1 omega subunit. When a sigma factor is associated with the core the holoenzyme is formed, which can initiate transcription.

The enzyme catalyses RNA(n) + a ribonucleoside 5'-triphosphate = RNA(n+1) + diphosphate. DNA-dependent RNA polymerase catalyzes the transcription of DNA into RNA using the four ribonucleoside triphosphates as substrates. The protein is DNA-directed RNA polymerase subunit alpha of Thiobacillus denitrificans (strain ATCC 25259 / T1).